Consider the following 623-residue polypeptide: Probable lysophospholipase 5 (623 aa).

The signal sequence occupies residues 1 to 19; sequence MKLSSFGLFLALQLLPALG. One can recognise a PLA2c domain in the interval 67 to 607; the sequence is ACPSGSLLRP…NQYCWNGTIA (541 aa). N-linked (GlcNAc...) asparagine glycosylation is found at asparagine 118, asparagine 153, asparagine 187, asparagine 232, asparagine 256, asparagine 264, asparagine 293, asparagine 331, asparagine 360, asparagine 367, asparagine 400, asparagine 403, asparagine 474, asparagine 508, asparagine 513, asparagine 537, asparagine 564, asparagine 586, and asparagine 603.

Belongs to the lysophospholipase family.

It localises to the secreted. The enzyme catalyses a 1-acyl-sn-glycero-3-phosphocholine + H2O = sn-glycerol 3-phosphocholine + a fatty acid + H(+). In terms of biological role, catalyzes the release of fatty acids from lysophospholipids. This Schizosaccharomyces pombe (strain 972 / ATCC 24843) (Fission yeast) protein is Probable lysophospholipase 5 (plb5).